We begin with the raw amino-acid sequence, 432 residues long: Transcription factor E2F1 (432 aa).

Disordered regions lie at residues 39-85 (DVGA…GRPP) and 98-126 (YLAG…KSRY). The interval 65–106 (ATPQAPRPAPSAPRPALGRPPVKRRLDLETDHQYLAGSSGPF) is cyclin A:CDK2 binding. The interval 87–189 (KRRLDLETDH…KKSKNHIQWL (103 aa)) is interaction with BIRC2/c-IAP1. Residues 108-192 (GRGRHPGKGV…KNHIQWLGSR (85 aa)) mediate DNA binding. Lysine 115, lysine 118, and lysine 123 each carry N6-acetyllysine. Positions 151 to 172 (LNWAAEVLKVQKRRIYDITNVL) are leucine-zipper. The DEF box motif lies at 156–192 (EVLKVQKRRIYDITNVLEGIQLIAKKSKNHIQWLGSR). Lysine 183 is subject to N6-methyllysine; by SETD7. The segment at 190 to 377 (GSRTMVGIGQ…RLSPLVAADS (188 aa)) is required for interaction with TRIM28. Residues 193–282 (TMVGIGQRLE…AVDSAETFQI (90 aa)) form a dimerization region. The tract at residues 297-342 (PEESAEGISPGRTSYQETSGEDRNADSGTAGPPPSPPSTSPTLDPS) is disordered. The segment at 363–432 (PMEEDRLSPL…DFGDLTPLDF (70 aa)) is transactivation. Serine 370 and serine 398 each carry phosphoserine. The RB1 binding stretch occupies residues 404-421 (VDYHFGLEEGEGIRDLFD). Threonine 428 is modified (phosphothreonine).

Belongs to the E2F/DP family. In terms of assembly, component of the DRTF1/E2F transcription factor complex. Forms heterodimers with DP family members. The E2F1 complex binds specifically hypophosphorylated RB1, the interaction represses E2F1-driven transcription. During the cell cycle, RB1 becomes phosphorylated in mid-to-late G1 phase, detaches from the DRTF1/E2F complex, rendering E2F transcriptionally active. Interacts with TRRAP, which probably mediates its interaction with histone acetyltransferase complexes, leading to transcription activation. Binds TOPBP1 and EAPP. Interacts with ARID3A. Interacts with TRIM28; the interaction inhibits E2F1 acetylation through recruiting HDAC1 and represses its transcriptional activity. Interaction with KAT2B; the interaction acetylates E2F1 enhancing its DNA-binding and transcriptional activity. Interacts with BIRC2/c-IAP1 (via BIR domains). The complex TFDP1:E2F1 interacts with CEBPA; the interaction prevents CEBPA binding to target genes promoters and represses its transcriptional activity. Interacts with RRP1B. Interacts with HCFC1. Interacts with KMT2E; the interaction is probably indirect and is mediated via HCFC1. Interacts with DCAF5 and L3MBTL3; the interaction requires methylation at Lys-183 and is necessary to target E2F1 for ubiquitination by the CRL4-DCAF5 E3 ubiquitin ligase complex. In terms of processing, phosphorylated by CDK2 and cyclin A-CDK2 in the S-phase. Phosphorylation by CHEK2 stabilizes E2F1 upon DNA damage and regulates its effect on transcription and apoptosis. Phosphorylation at Ser-398 by GSK3B promotes interaction with USP11, leading to its deubiquitination and stabilization. Post-translationally, ubiquitinated via 'Lys-63'-linked ubiquitin, leading to its degradation. Deubiquitinated by USP11 following phosphorylation by GSK3B, promoting its stability. Acetylation stimulates DNA-binding. Enhanced under stress conditions such as DNA damage and inhibited by retinoblastoma protein RB1. Regulated by KAP1/TRIM28 which recruits HDAC1 to E2F1 resulting in deacetylation. In terms of processing, methylation at Lys-183 by SETD7 promotes E2F1 ubiquitin-dependent proteasomal degradation.

The protein localises to the nucleus. With respect to regulation, BIRC2/c-IAP1 stimulates its transcriptional activity. Transcription activator that binds DNA cooperatively with DP proteins through the E2 recognition site, 5'-TTTC[CG]CGC-3' found in the promoter region of a number of genes whose products are involved in cell cycle regulation or in DNA replication. The DRTF1/E2F complex functions in the control of cell-cycle progression from G1 to S phase. E2F1 binds preferentially RB1 in a cell-cycle dependent manner. It can mediate both cell proliferation and TP53/p53-dependent apoptosis. Blocks adipocyte differentiation by binding to specific promoters repressing CEBPA binding to its target gene promoters. Directly activates transcription of PEG10. Positively regulates transcription of RRP1B. This chain is Transcription factor E2F1, found in Rattus norvegicus (Rat).